Consider the following 208-residue polypeptide: Large ribosomal subunit protein uL3 (208 aa).

Belongs to the universal ribosomal protein uL3 family. In terms of assembly, part of the 50S ribosomal subunit. Forms a cluster with proteins L14 and L19.

Functionally, one of the primary rRNA binding proteins, it binds directly near the 3'-end of the 23S rRNA, where it nucleates assembly of the 50S subunit. The chain is Large ribosomal subunit protein uL3 from Desulfosudis oleivorans (strain DSM 6200 / JCM 39069 / Hxd3) (Desulfococcus oleovorans).